Reading from the N-terminus, the 524-residue chain is Phytoene desaturase (neurosporene-forming) (524 aa).

An FAD-binding site is contributed by 12-45 (VVIGAGLGGLAAAMRLGAKGYKVTVVDRLDRPGG). Residues 500–524 (PDAPKPETPAAAAPKARTPRAKAAQ) form a disordered region. A compositionally biased stretch (low complexity) spans 507–524 (TPAAAAPKARTPRAKAAQ).

The protein belongs to the carotenoid/retinoid oxidoreductase family. The cofactor is FAD.

It catalyses the reaction 15-cis-phytoene + 3 A = all-trans-neurosporene + 3 AH2. The protein operates within carotenoid biosynthesis. With respect to regulation, is inhibited by diphenylamine (DPA). Is also slightly inhibited by NAD, NADP or ATP in the presence of FAD. In terms of biological role, converts phytoene into all-trans-neurosporene as the major product, via the intermediary of phytofluene and zeta-carotene, by the introduction of three double bonds. Both intermediates, phytofluene and zeta-carotene, can be used as substrates and converted to neurosporene. 1,2-epoxy phytoene is also a suitable substrate whereas the C30 diapophytoene is not. This Rhodobacter capsulatus (strain ATCC BAA-309 / NBRC 16581 / SB1003) protein is Phytoene desaturase (neurosporene-forming) (crtI).